We begin with the raw amino-acid sequence, 103 residues long: Flagellar hook-basal body complex protein FliE (103 aa).

The protein belongs to the FliE family.

The protein resides in the bacterial flagellum basal body. This is Flagellar hook-basal body complex protein FliE from Yersinia pestis.